Consider the following 379-residue polypeptide: Cobalt-precorrin-5B C(1)-methyltransferase (379 aa).

Belongs to the CbiD family.

The catalysed reaction is Co-precorrin-5B + S-adenosyl-L-methionine = Co-precorrin-6A + S-adenosyl-L-homocysteine. It participates in cofactor biosynthesis; adenosylcobalamin biosynthesis; cob(II)yrinate a,c-diamide from sirohydrochlorin (anaerobic route): step 6/10. Functionally, catalyzes the methylation of C-1 in cobalt-precorrin-5B to form cobalt-precorrin-6A. The protein is Cobalt-precorrin-5B C(1)-methyltransferase of Edwardsiella ictaluri (strain 93-146).